Reading from the N-terminus, the 502-residue chain is UPF0371 protein CLH_2534 (502 aa).

Belongs to the UPF0371 family.

The polypeptide is UPF0371 protein CLH_2534 (Clostridium botulinum (strain Alaska E43 / Type E3)).